The chain runs to 42 residues: Cytochrome b559 subunit beta (42 aa).

The chain crosses the membrane as a helical span at residues W17–A33. Heme is bound at residue H21.

This sequence belongs to the PsbE/PsbF family. As to quaternary structure, heterodimer of an alpha subunit and a beta subunit. PSII is composed of 1 copy each of membrane proteins PsbA, PsbB, PsbC, PsbD, PsbE, PsbF, PsbH, PsbI, PsbJ, PsbK, PsbL, PsbM, PsbT, PsbX, PsbY, PsbZ, Psb30/Ycf12, at least 3 peripheral proteins of the oxygen-evolving complex and a large number of cofactors. It forms dimeric complexes. It depends on heme b as a cofactor.

The protein resides in the plastid. Its subcellular location is the chloroplast thylakoid membrane. Functionally, this b-type cytochrome is tightly associated with the reaction center of photosystem II (PSII). PSII is a light-driven water:plastoquinone oxidoreductase that uses light energy to abstract electrons from H(2)O, generating O(2) and a proton gradient subsequently used for ATP formation. It consists of a core antenna complex that captures photons, and an electron transfer chain that converts photonic excitation into a charge separation. This is Cytochrome b559 subunit beta from Tupiella akineta (Green alga).